The chain runs to 642 residues: Threonine--tRNA ligase (642 aa).

Residues 1-61 (MPVITLPDGS…SEDANLVIFT (61 aa)) form the TGS domain. Positions 243 to 534 (DHRKLAKKFD…LIEHYEGSFP (292 aa)) are catalytic. Residues C334, H385, and H511 each contribute to the Zn(2+) site.

Belongs to the class-II aminoacyl-tRNA synthetase family. As to quaternary structure, homodimer. Zn(2+) serves as cofactor.

The protein localises to the cytoplasm. The enzyme catalyses tRNA(Thr) + L-threonine + ATP = L-threonyl-tRNA(Thr) + AMP + diphosphate + H(+). Its function is as follows. Catalyzes the attachment of threonine to tRNA(Thr) in a two-step reaction: L-threonine is first activated by ATP to form Thr-AMP and then transferred to the acceptor end of tRNA(Thr). Also edits incorrectly charged L-seryl-tRNA(Thr). The protein is Threonine--tRNA ligase of Cellvibrio japonicus (strain Ueda107) (Pseudomonas fluorescens subsp. cellulosa).